The chain runs to 603 residues: DNA mismatch repair protein MutL (603 aa).

This sequence belongs to the DNA mismatch repair MutL/HexB family.

Functionally, this protein is involved in the repair of mismatches in DNA. It is required for dam-dependent methyl-directed DNA mismatch repair. May act as a 'molecular matchmaker', a protein that promotes the formation of a stable complex between two or more DNA-binding proteins in an ATP-dependent manner without itself being part of a final effector complex. The sequence is that of DNA mismatch repair protein MutL from Sphingopyxis alaskensis (strain DSM 13593 / LMG 18877 / RB2256) (Sphingomonas alaskensis).